The sequence spans 140 residues: Large ribosomal subunit protein bL17 (140 aa).

The interval 119-140 (DTTAKGQDSGPVQVEEQENEEA) is disordered.

The protein belongs to the bacterial ribosomal protein bL17 family. As to quaternary structure, part of the 50S ribosomal subunit. Contacts protein L32.

The sequence is that of Large ribosomal subunit protein bL17 from Zymomonas mobilis subsp. mobilis (strain ATCC 31821 / ZM4 / CP4).